A 346-amino-acid polypeptide reads, in one-letter code: Anthocyanidin 3-O-glucosyltransferase 2 (346 aa).

Residues alanine 221, glutamine 223, histidine 238, tryptophan 241, asparagine 242, serine 243, and glutamate 246 each coordinate UDP-alpha-D-glucose. An anthocyanidin is bound at residue alanine 261. UDP-alpha-D-glucose is bound by residues glutamate 262 and glutamine 263.

It belongs to the UDP-glycosyltransferase family. In terms of tissue distribution, expressed in cotyledons, roots and leaves.

The enzyme catalyses an anthocyanidin + UDP-alpha-D-glucose + H(+) = an anthocyanidin 3-O-beta-D-glucoside + UDP. It participates in pigment biosynthesis; anthocyanin biosynthesis. Its function is as follows. In the presence of other necessary color factors, this glycosylation reaction allows the accumulation of anthocyanin pigments. In Manihot esculenta (Cassava), this protein is Anthocyanidin 3-O-glucosyltransferase 2 (GT2).